A 386-amino-acid chain; its full sequence is D(1)-like dopamine receptor (386 aa).

Over residues 1–10 (MEIFTTTRGT) the composition is skewed to polar residues. The interval 1–28 (MEIFTTTRGTSAGPEPAPGGHGGTDSPR) is disordered. At 1 to 35 (MEIFTTTRGTSAGPEPAPGGHGGTDSPRTSDLSLR) the chain is on the extracellular side. Residues 36 to 56 (ALTGCVLCILIVSTLLGNALV) form a helical membrane-spanning segment. Over 57–72 (CAAVIKFRHLRSKVTN) the chain is Cytoplasmic. A helical transmembrane segment spans residues 73–92 (AFVISLAVSDLFVAVLVMPW). The Extracellular segment spans residues 93 to 109 (RAVSEVAGVWLFGAFCD). Cysteine 108 and cysteine 188 are joined by a disulfide. Residues 110 to 131 (TWVAFDIMCSTASILHLCIISM) traverse the membrane as a helical segment. Residues 132 to 150 (DRYWAISSPFRYERRMTPR) lie on the Cytoplasmic side of the membrane. Residues 151-175 (FGCVMIGVAWTLSVLISFIPVQLNW) form a helical membrane-spanning segment. The Extracellular portion of the chain corresponds to 176 to 195 (HARGRERTDPGDCNASLNRT). Asparagine 189 and asparagine 193 each carry an N-linked (GlcNAc...) asparagine glycan. A helical transmembrane segment spans residues 196–220 (YAISSSLISFYIPVLIMVGTYTRIF). At 221 to 266 (RIGRTQIRRISSLERAAPRATRGPALCDEESSLKTSFRRETKVLKT) the chain is on the cytoplasmic side. Residues 267–292 (LSVIMGVFVFCWLPFFVLNCMVPFCR) traverse the membrane as a helical segment. Residues 293–305 (LEPAAAPCVSDTT) are Extracellular-facing. A helical membrane pass occupies residues 306–325 (FSVFVWFGWANSSLNPVIYA). Topologically, residues 326–386 (FNADFRKAFS…SRGGPYQFAL (61 aa)) are cytoplasmic.

It belongs to the G-protein coupled receptor 1 family.

It localises to the cell membrane. It is found in the cell projection. The protein resides in the cilium membrane. Its function is as follows. This is one of the five types (D1 to D5) of receptors for dopamine. The activity of this receptor is mediated by G proteins which activate adenylyl cyclase. The protein is D(1)-like dopamine receptor of Oreochromis mossambicus (Mozambique tilapia).